Reading from the N-terminus, the 81-residue chain is Teretoxin Tsu6.8 (81 aa).

The signal sequence occupies residues 1 to 21 (MATSGRLLCLCLVLGLIFESL). A propeptide spanning residues 22-45 (GHPVMGEKRAGENASPSARSLPKR) is cleaved from the precursor.

The protein belongs to the teretoxin M (TM) superfamily. Contains 3 disulfide bonds. In terms of tissue distribution, expressed by the venom duct.

Its subcellular location is the secreted. This Terebra subulata (Chocolate spotted auger) protein is Teretoxin Tsu6.8.